A 341-amino-acid chain; its full sequence is Tryptophan--tRNA ligase (341 aa).

Residues 11–13 (RPT) and 19–20 (GH) contribute to the ATP site. The 'HIGH' region signature appears at 12–20 (PTGKLHIGH). An L-tryptophan-binding site is contributed by Asp-140. ATP is bound by residues 152–154 (GTD), Leu-194, and 202–206 (KMSKS). A 'KMSKS' region motif is present at residues 202-206 (KMSKS).

The protein belongs to the class-I aminoacyl-tRNA synthetase family. Homodimer.

It is found in the cytoplasm. The enzyme catalyses tRNA(Trp) + L-tryptophan + ATP = L-tryptophyl-tRNA(Trp) + AMP + diphosphate + H(+). Catalyzes the attachment of tryptophan to tRNA(Trp). The polypeptide is Tryptophan--tRNA ligase (Streptococcus pneumoniae serotype 4 (strain ATCC BAA-334 / TIGR4)).